A 288-amino-acid chain; its full sequence is N-acetylneuraminate lyase (288 aa).

Ser44 and Thr45 together coordinate aceneuramate. Tyr133 (proton donor) is an active-site residue. The Schiff-base intermediate with substrate role is filled by Lys161. Residues Thr163, Gly185, Asp187, Glu188, and Ser204 each contribute to the aceneuramate site.

It belongs to the DapA family. NanA subfamily. As to quaternary structure, homotetramer.

It localises to the cytoplasm. The catalysed reaction is aceneuramate = aldehydo-N-acetyl-D-mannosamine + pyruvate. It participates in amino-sugar metabolism; N-acetylneuraminate degradation; D-fructose 6-phosphate from N-acetylneuraminate: step 1/5. Functionally, catalyzes the reversible aldol cleavage of N-acetylneuraminic acid (sialic acid; Neu5Ac) to form pyruvate and N-acetylmannosamine (ManNAc) via a Schiff base intermediate. The polypeptide is N-acetylneuraminate lyase (Clostridium perfringens (strain SM101 / Type A)).